We begin with the raw amino-acid sequence, 705 residues long: Double-strand break repair protein MRE11 (705 aa).

Mn(2+) contacts are provided by aspartate 15, histidine 17, aspartate 55, and asparagine 122. The Proton donor role is filled by histidine 123. Histidine 220, histidine 248, and histidine 250 together coordinate Mn(2+). A compositionally biased stretch (basic and acidic residues) spans 505–514 (RSLRSKEDSR). The disordered stretch occupies residues 505 to 705 (RSLRSKEDSR…TRNYGAVRRR (201 aa)). Composition is skewed to polar residues over residues 515–538 (FTSSSQNLDTGGRSVTAQSNLNSF) and 589–605 (SMKQTTLNFSQSRSSAA). The span at 641-663 (GRKRAAPRGGRGRGRGATAKRGR) shows a compositional bias: basic residues.

Belongs to the MRE11/RAD32 family. As to quaternary structure, component of the MRN complex composed of two heterodimers RAD50/MRE11 associated with a single NBS1. The cofactor is Mn(2+).

It is found in the nucleus. The protein resides in the chromosome. Its function is as follows. Core component of the MRN complex, which plays a central role in double-strand break (DSB) repair, DNA recombination, maintenance of telomere integrity and meiosis. The MRN complex is involved in the repair of DNA double-strand breaks (DSBs) via homologous recombination (HR), an error-free mechanism which primarily occurs during S and G2 phases. The complex (1) mediates the end resection of damaged DNA, which generates proper single-stranded DNA, a key initial steps in HR, and is (2) required for the recruitment of other repair factors and efficient activation of ATM and ATR upon DNA damage. Within the MRN complex, MRE11 possesses both single-strand endonuclease activity and double-strand-specific 3'-5' exonuclease activity. MRE11 first endonucleolytically cleaves the 5' strand at DNA DSB ends to prevent non-homologous end joining (NHEJ) and licence HR. It then generates a single-stranded DNA gap via 3' to 5' exonucleolytic degradation, which is required for single-strand invasion and recombination. This is Double-strand break repair protein MRE11 from Oryza sativa subsp. indica (Rice).